A 105-amino-acid chain; its full sequence is Signal peptidase complex subunit 1 (105 aa).

Residues 1–32 are Cytoplasmic-facing; sequence MDGMIAMLPAPLQKLSSHIDFQGQKVAERTYQ. A helical transmembrane segment spans residues 33 to 53; it reads VILTIAGIIGFLVGFWTQQLS. At 54–56 the chain is on the lumenal side; it reads YAM. The chain crosses the membrane as a helical span at residues 57-77; the sequence is FTVLGASAFTALIILPPWPFL. Over 78-105 the chain is Cytoplasmic; it reads FRKNPIVWHTPAEPQESGDKKKETKKTK.

This sequence belongs to the SPCS1 family. Component of the signal peptidase complex (SPC) composed of a catalytic subunit sec-11 and three accessory subunits spcs-1, spcs-2 and spcs-3. The complex induces a local thinning of the ER membrane which is used to measure the length of the signal peptide (SP) h-region of protein substrates. This ensures the selectivity of the complex towards h-regions shorter than 18-20 amino acids.

It localises to the endoplasmic reticulum membrane. In terms of biological role, component of the signal peptidase complex (SPC) which catalyzes the cleavage of N-terminal signal sequences from nascent proteins as they are translocated into the lumen of the endoplasmic reticulum. Dispensable for SPC enzymatic activity. This is Signal peptidase complex subunit 1 from Caenorhabditis elegans.